Here is a 2774-residue protein sequence, read N- to C-terminus: Teneurin-2 (2774 aa).

The region spanning 1–375 is the Teneurin N-terminal domain; the sequence is MDVKDRRHRS…KPSKYCSWKC (375 aa). The Cytoplasmic segment spans residues 1-379; the sequence is MDVKDRRHRS…YCSWKCAALS (379 aa). Residues S90 and S124 each carry the phosphoserine modification. Positions 111–271 are disordered; sequence TGSDADSDTE…HHHSSANSLN (161 aa). Residues 141 to 155 show a composition bias toward polar residues; sequence SSGLSSRENSALTLT. T155 is subject to Phosphothreonine. S157 carries the phosphoserine modification. Over residues 159 to 168 the composition is skewed to basic and acidic residues; sequence NENKSDDENG. The span at 176 to 188 shows a compositional bias: low complexity; the sequence is SPSLLPSAQLPSS. Residues 202-211 show a composition bias toward polar residues; the sequence is DSNTSHQIMD. The segment covering 229–240 has biased composition (low complexity); sequence SGPQQASSSGPP. The helical transmembrane segment at 380-400 threads the bilayer; sequence AIAAALLLAILLAYFIAMHLL. Residues 401–2774 lie on the Extracellular side of the membrane; the sequence is GLNWQLQPAD…FLRQNEMGKR (2374 aa). 2 N-linked (GlcNAc...) asparagine glycosylation sites follow: N443 and N482. 8 EGF-like domains span residues 575–603, 598–634, 636–668, 669–701, 702–735, 738–766, 769–797, and 808–841; these read DCPR…ADCA, LGAD…AECD, PMNQ…EHCE, EVDC…NCEL, ARVQ…PDCS, VCSV…AACD, VCHP…EHCT, and DGCP…PGCN. 22 disulfide bridges follow: C576–C586, C580–C591, C593–C602, C611–C622, C624–C633, C640–C651, C645–C656, C658–C667, C672–C683, C677–C688, C690–C699, C710–C723, C725–C734, C739–C749, C743–C754, C756–C765, C770–C780, C774–C785, C787–C796, C810–C820, C814–C829, and C831–C840. N925, N948, and N1267 each carry an N-linked (GlcNAc...) asparagine glycan. NHL repeat units lie at residues 1272 to 1316, 1342 to 1386, 1401 to 1452, 1474 to 1501, and 1530 to 1573; these read LELR…VKSL, ARCG…NGII, LSCD…IAGR, LESA…INRL, and CYSG…VSKN. The stretch at 1583-1602 is one YD 1 repeat; sequence YEAASPGEQELYVFNADGIH. An N-linked (GlcNAc...) asparagine glycan is attached at N1616. YD repeat units follow at residues 1619–1639, 1682–1701, and 1702–1724; these read YSTD…LKIR, YDGN…WTTF, and YDYD…TSLH. Residues N1712, N1749, N1773, N1807, and N1892 are each glycosylated (N-linked (GlcNAc...) asparagine). 18 YD repeats span residues 1895-1914, 1936-1954, 1955-1975, 1982-1999, 2000-2021, 2022-2039, 2042-2062, 2065-2085, 2093-2113, 2119-2136, 2137-2163, 2165-2178, 2179-2202, 2205-2225, 2226-2246, 2248-2268, 2280-2300, and 2302-2322; these read YFFN…ERTD, YLDK…YIFE, YDSS…HSMS, YIRN…VIFD, YSDD…VFYK, YGKL…TAVT, YDET…FSCT, YRKI…EGMV, YHDN…TPLP, YDEI…GVIY, YDIN…IKEV, YEMF…MTVQ, YDSM…TKYT, YDGD…WRYS, YDLN…LMPL, YDLR…DDDG, YNSK…SVQY, and YDGV…LQYF. N1993 is a glycosylation site (N-linked (GlcNAc...) asparagine). N2197 carries an N-linked (GlcNAc...) asparagine glycan. N2337 carries N-linked (GlcNAc...) asparagine glycosylation. One copy of the YD 23 repeat lies at 2348-2389; the sequence is YDLQGHLFAMESSSGEEYYVASDNTGTPLAVFSINGLMIKQL. N2648 is a glycosylation site (N-linked (GlcNAc...) asparagine).

The protein belongs to the tenascin family. Teneurin subfamily. Homodimer; disulfide-linked. Heterodimer with either TENM1 or TENM3. May also form heterodimer with TENM4. Isoform 2 (C-terminal globular domain) interacts with ADGRL1 isoform 2. Derives from the membrane form by proteolytic processing. Post-translationally, derives from the plasma membrane form by proteolytic cleavage and translocates to the nucleus. Homophilic binding of the C-terminal extracellular domain stimulates its proteolytic cleavage and release in the cytoplasmic. Is subjected to rapid degradation by the proteasome pathway. Highly expressed in heart, followed by brain, liver, kidney and fetal brain and weakly expressed in lung and testis. No expression was detected in skeletal muscle, pancreas, spleen, ovary and fetal liver.

It localises to the cell membrane. The protein resides in the presynaptic cell membrane. The protein localises to the postsynaptic cell membrane. Its subcellular location is the endoplasmic reticulum. It is found in the golgi apparatus. It localises to the synapse. The protein resides in the cell projection. The protein localises to the dendritic spine. Its subcellular location is the filopodium. It is found in the growth cone. It localises to the nucleus. The protein resides in the PML body. Functionally, involved in neural development, regulating the establishment of proper connectivity within the nervous system. Acts as a ligand of the ADGRL1 and ADGRL3 receptors that are expressed at the surface of adjacent cells. Promotes the formation of filopodia and enlarged growth cone in neuronal cells. Mediates axon guidance and homophilic and heterophilic cell-cell adhesion. May function as a cellular signal transducer. In terms of biological role, acts as a ligand of the ADGRL1 receptor. Mediates axon guidance and heterophilic cell-cell adhesion. Its function is as follows. Induces gene transcription inhibition. The chain is Teneurin-2 (TENM2) from Homo sapiens (Human).